Reading from the N-terminus, the 4911-residue chain is Histone-lysine N-methyltransferase 2C (4911 aa).

Residues 1 to 101 are disordered; the sequence is MSSEEDKSVE…EDAEAEVDNS (101 aa). The segment covering 12 to 28 has biased composition (pro residues); it reads PQPPPPPPEEPGAPAPS. Phosphoserine is present on residues S28 and S46. The a.T hook DNA-binding region spans 34–46; it reads KRPRGRPRKDGAS. Residues 50–59 show a composition bias toward basic residues; the sequence is RARKKPRSRG. Residues 64-81 show a composition bias toward acidic residues; that stretch reads EDEDSMDGLETTETETIV. S89 is modified (phosphoserine). The stretch at 92–112 forms a coiled coil; sequence EDAEAEVDNSKQLIPTLQRSV. S113 is subject to Phosphoserine. Residues 164–203 are disordered; sequence RNQPSNKKDIDDNSNGTYEKMQNSAPRKQRGQRKERSPQQ. A compositionally biased stretch (polar residues) spans 176–189; sequence NSNGTYEKMQNSAP. S200 is subject to Phosphoserine. The C2HC pre-PHD-type 1; degenerate zinc finger occupies 227-262; it reads ELSLVGLPDAIDIQALFDSTGTCWAHHRCVEWSLGV. PHD-type zinc fingers lie at residues 283 to 331, 341 to 391, 388 to 438, and 464 to 520; these read ERCA…PEHI, DANC…CKVC, CKVC…CRIC, and DNLC…CKHL. Residues 344-389 form an RING-type zinc finger; that stretch reads CAVCDSPGDLLDQFFCTTCGQHYHGMCLDIAVTPLKRAGWQCPECK. The region spanning 436–489 is the DHHC domain; sequence RICIECGTRSSSQWHHNCLICDNCYQQQDNLCPFCGKCYHPELQKDMLHCNMCK. Positions 644 to 672 form a coiled coil; that stretch reads EDKMEVTENIEVVTHQITVQQEQLQLLEE. A compositionally biased stretch (basic and acidic residues) spans 721–730; the sequence is QGEKEQKENS. The disordered stretch occupies residues 721–742; sequence QGEKEQKENSELSTGLMDSEMT. K758 is modified (N6-acetyllysine). Low complexity predominate over residues 763–791; that stretch reads SSETESSFSSSADISKADVSSSPTPSSDL. Disordered stretches follow at residues 763-798, 828-864, and 885-912; these read SSET…DMLH, PAIT…DISE, and GRGS…RSKL. Over residues 830 to 842 the composition is skewed to basic residues; the sequence is ITKRKFSPGRPRS. Polar residues predominate over residues 845–856; that stretch reads GAWSTHNTVSPP. Position 854 is a phosphoserine (S854). PHD-type zinc fingers lie at residues 957–1010, 1007–1057, and 1084–1139; these read QDMC…CTVC, CTVC…CVWC, and LSSC…CRPY. The disordered stretch occupies residues 1215-1324; it reads AVLQTPPDIQ…LPCRDDGWSE (110 aa). The span at 1224-1270 shows a compositional bias: basic and acidic residues; it reads QSEHSRDGEMDDSREGELMDCDGKSESSPEREAVDDETKGVEGTDGV. S1301 is subject to Phosphoserine. The stretch at 1338-1366 forms a coiled coil; the sequence is TESTEKIKKRYRKRKNKLEETFPAYLQEA. The span at 1406–1416 shows a compositional bias: low complexity; that stretch reads PSLDPLLSSSS. 2 disordered regions span residues 1406-1431 and 1458-1485; these read PSLD…DDPL and HSDI…PLSE. The span at 1467–1482 shows a compositional bias: polar residues; sequence DPSSLPQPNVNQSSRP. K1508 is modified (N6-acetyllysine). Disordered regions lie at residues 1604–1630 and 1709–2448; these read FNPM…DTMS and VQMS…SPVA. Composition is skewed to polar residues over residues 1610 to 1620 and 1709 to 1727; these read DPNNSWTSSAP and VQMS…SIDP. Residues 1729-1753 are compositionally biased toward basic and acidic residues; the sequence is SRIDSELFKDPLKQRESEHEQEWKF. The stretch at 1754–1787 forms a coiled coil; that stretch reads RQQMRQKSKQQAKIEATQKLEQVKNEQQQQQQQQ. K1772 carries the post-translational modification N6-acetyllysine. Residues 1788 to 1823 show a composition bias toward polar residues; sequence FGSQHLLVQSGSDTPSSGIQSPLTPQPGNGNMSPAQ. Residues 1851–1860 are compositionally biased toward pro residues; that stretch reads QAPPPPPAPS. Over residues 1861–1875 the composition is skewed to low complexity; that stretch reads RIPIQDSLSQAQTSQ. The segment covering 1927–1945 has biased composition (polar residues); the sequence is TPLSSVSRPLQMNETTANR. Residue S1987 is modified to Phosphoserine. K2009 carries the post-translational modification N6-acetyllysine. 4 stretches are compositionally biased toward polar residues: residues 2054-2065, 2085-2094, 2115-2131, and 2144-2159; these read QDPYGSVSQASR, FSHNQSNDPY, AFSQ…QDPY, and SYSQ…TDPY. Positions 2173 to 2187 are enriched in low complexity; the sequence is PYSQQPQTPRPSTQT. 3 stretches are compositionally biased toward polar residues: residues 2302 to 2319, 2335 to 2353, and 2362 to 2375; these read SPMT…SQTA, CASS…SGVS, and SGVT…NMAQ. The segment covering 2377–2389 has biased composition (basic and acidic residues); it reads DTEKLRQRQKLRE. Residues 2390 to 2399 are compositionally biased toward low complexity; that stretch reads IILQQQQQKK. Residues R2454 and R2571 each carry the asymmetric dimethylarginine modification. Disordered stretches follow at residues 2589–2694, 2793–2887, 2925–2954, and 2989–3029; these read RHGN…SDDP, EPKK…RETA, EKSD…VSSL, and VNPG…SGPQ. Polar residues-rich tracts occupy residues 2629 to 2645 and 2661 to 2682; these read PPSQ…SSMV and PLST…TQPS. Positions 2793-2811 are enriched in basic and acidic residues; sequence EPKKKEQENKTLVLSDKHS. N6-acetyllysine occurs at positions 2802 and 2809. A compositionally biased stretch (polar residues) spans 2814 to 2832; it reads KKSTVTNEVKTEVLSPNSK. S2828 carries the post-translational modification Phosphoserine. K2832 is subject to N6-acetyllysine. Over residues 2833–2849 the composition is skewed to basic and acidic residues; sequence VESKCETEKNDENKDNV. The span at 2851-2860 shows a compositional bias: polar residues; it reads TPCSQASAHS. A compositionally biased stretch (basic and acidic residues) spans 2861-2884; that stretch reads DLNDGEKTSLHPCDPDLFEKRTNR. Position 2867 is an N6-acetyllysine (K2867). Over residues 3011 to 3029 the composition is skewed to low complexity; that stretch reads TQTGPQTSQSGTSSMSGPQ. 3 coiled-coil regions span residues 3054-3081, 3173-3272, and 3391-3433; these read LLQD…QRSE, NDSQ…QQQQ, and FSES…EMEQ. Over residues 3205–3221 the composition is skewed to basic residues; that stretch reads HRKSKKALSAKQRTAKK. Disordered regions lie at residues 3205-3241, 3353-3409, 3527-3583, 3596-3919, and 4024-4053; these read HRKS…TEQQ, PPIA…EQQE, PNFS…HSYP, IIPE…MANG, and VKEE…SRRN. Basic and acidic residues-rich tracts occupy residues 3222 to 3238 and 3395 to 3409; these read AGRE…KHVT and FQER…EQQE. 4 stretches are compositionally biased toward polar residues: residues 3527–3549, 3564–3583, 3637–3658, and 3684–3701; these read PNFS…QSPV, ANSS…HSYP, ISET…QADQ, and LPNS…TYAN. The segment covering 3703–3725 has biased composition (basic and acidic residues); that stretch reads EVDKLSMETPAKTEEIKLEKAET. K3714 bears the N6-acetyllysine mark. S3758 carries the post-translational modification Phosphoserine. Positions 3803 to 3812 are enriched in basic and acidic residues; that stretch reads DCTKDNKLVE. Residues 3878–3892 show a composition bias toward polar residues; sequence MYSSTDTFTHLKQQN. Positions 3897-3911 are enriched in pro residues; that stretch reads PPTPPASLPPTPPPM. S4034 carries the post-translational modification Phosphoserine. R4139 carries the post-translational modification Asymmetric dimethylarginine. Position 4267 is a phosphoserine (S4267). A C2HC pre-PHD-type 2 zinc finger spans residues 4399-4439; sequence YRKCCFCHEEGDGLTDGPARLLNLDLDLWVHLNCALWSTEV. The PHD-type 8 zinc finger occupies 4460–4507; that stretch reads MKCVFCHKTGATSGCHRFRCTNIYHFTCAIKAQCMFFKDKTMLCPMHK. The 61-residue stretch at 4545–4605 folds into the FYR N-terminal domain; sequence DHTFRVGSLI…CRYLCSIEEK (61 aa). Residues 4606–4691 form the FYR C-terminal domain; the sequence is DGRPVFVIRI…EACENYTFRY (86 aa). Positions 4707-4712 match the WDR5 interaction motif (WIN) motif; sequence GCARSE. The region spanning 4771–4887 is the SET domain; the sequence is SNVYLARSRI…KGEELCYDYK (117 aa). S-adenosyl-L-methionine contacts are provided by residues Y4825 and 4848 to 4849; that span reads NH. Positions 4851, 4899, 4901, and 4906 each coordinate Zn(2+). One can recognise a Post-SET domain in the interval 4895–4911; the sequence is HKIPCHCGAVNCRKWMN.

It belongs to the class V-like SAM-binding methyltransferase superfamily. Histone-lysine methyltransferase family. TRX/MLL subfamily. As to quaternary structure, component of the MLL3 complex (also named ASCOM complex), at least composed of catalytic subunit KMT2C/MLL3, ASH2L, RBBP5, WDR5, NCOA6, DPY30, KDM6A, PAXIP1/PTIP, PAGR1 and alpha- and beta-tubulin. Forms a core complex with the evolutionary conserved subcomplex WRAD composed of WDR5, RBBP5, ASH2L/ASH2 and DPY30 subunits; WRAD differentially stimulates the methyltransferase activity. Interacts (via WIN motif) with WDR5. As to expression, highly expressed in testis and ovary, followed by brain and liver. Also expressed in placenta, peripherical blood, fetal thymus, heart, lung and kidney. Within brain, expression was highest in hippocampus, caudate nucleus, and substantia nigra. Not detected in skeletal muscle and fetal liver.

Its subcellular location is the nucleus. The catalysed reaction is L-lysyl(4)-[histone H3] + S-adenosyl-L-methionine = N(6)-methyl-L-lysyl(4)-[histone H3] + S-adenosyl-L-homocysteine + H(+). Functionally, histone methyltransferase that catalyzes methyl group transfer from S-adenosyl-L-methionine to the epsilon-amino group of 'Lys-4' of histone H3 (H3K4). Part of chromatin remodeling machinery predominantly forms H3K4me1 methylation marks at active chromatin sites where transcription and DNA repair take place. Likely plays a redundant role with KMT2D in enriching H3K4me1 mark on primed and active enhancer elements. This Homo sapiens (Human) protein is Histone-lysine N-methyltransferase 2C (KMT2C).